The following is a 107-amino-acid chain: Ig kappa chain V-VI region SAPC 10 (107 aa).

A framework-1 region spans residues 1 to 23 (EIVLTQSPAITAASLGQKVTITC). The cysteines at positions 23 and 87 are disulfide-linked. The segment at 24-33 (SASSSVSYMH) is complementarity-determining-1. The interval 34–48 (WYQQKSGTSPKPWIY) is framework-2. Residues 49–55 (EISKLAS) are complementarity-determining-2. The segment at 56 to 87 (GVPARFSGSGSGTSYSLTISSMEAEDAAIYYC) is framework-3. A complementarity-determining-3 region spans residues 88–96 (QQWNYPLIT). The segment at 97-106 (FGGGTKLEIK) is framework-4.

The chain is Ig kappa chain V-VI region SAPC 10 from Mus musculus (Mouse).